We begin with the raw amino-acid sequence, 200 residues long: MRITLLDNFDSFTYNLVEQFCLLGAEVRVMRNDTPLPTIQAALLADGCELLVLSPGPGRPEDAGCMLELLAWARGRLPVLGVCLGHQALALAAGGAVGEARKPLHGKSTSLRFDQRHPLFDGIADLRVARYHSLVVSRLPEGFDCLADADGEIMAMADPRNRQLGLQFHPESILTTHGQRLLENALLWCGALAVRERLRA.

In terms of domain architecture, Glutamine amidotransferase type-1 spans 2-195 (RITLLDNFDS…LLWCGALAVR (194 aa)). Position 56–58 (56–58 (GPG)) interacts with L-glutamine. Catalysis depends on C83, which acts as the Nucleophile; for GATase activity. Residues Q87 and 133–134 (SL) contribute to the L-glutamine site. Residues H169 and E171 each act as for GATase activity in the active site.

Heterotetramer consisting of two non-identical subunits: a beta subunit (PhnB) and a large alpha subunit (PhnA).

The catalysed reaction is chorismate + L-glutamine = anthranilate + pyruvate + L-glutamate + H(+). The protein operates within secondary metabolite biosynthesis; pyocyanine biosynthesis. Part of a heterotetrameric complex that catalyzes the two-step biosynthesis of anthranilate, a precursor for Pseudomonas quinolone signal (2-heptyl-3-hydroxy-4-quinolone; PQS) production which is required to induce the genes for the biosynthesis of the virulence factor pyocyanine (PCN), a characteristic blue-green phenazine pigment produced by P.aeruginosa. In the first step, the glutamine-binding beta subunit (PhnB) of anthranilate synthase (AS) provides the glutamine amidotransferase activity which generates ammonia as a substrate that, along with chorismate, is used in the second step, catalyzed by the large alpha subunit of AS (PhnA) to produce anthranilate. The sequence is that of Anthranilate synthase component 2, pyocyanine specific from Pseudomonas aeruginosa (strain ATCC 15692 / DSM 22644 / CIP 104116 / JCM 14847 / LMG 12228 / 1C / PRS 101 / PAO1).